Here is a 507-residue protein sequence, read N- to C-terminus: ATP synthase subunit alpha, chloroplastic (507 aa).

ATP is bound at residue 169 to 176 (IGDRQTGK).

Belongs to the ATPase alpha/beta chains family. As to quaternary structure, F-type ATPases have 2 components, CF(1) - the catalytic core - and CF(0) - the membrane proton channel. CF(1) has five subunits: alpha(3), beta(3), gamma(1), delta(1), epsilon(1). CF(0) has four main subunits: a, b, b' and c.

It localises to the plastid. It is found in the chloroplast thylakoid membrane. It catalyses the reaction ATP + H2O + 4 H(+)(in) = ADP + phosphate + 5 H(+)(out). Produces ATP from ADP in the presence of a proton gradient across the membrane. The alpha chain is a regulatory subunit. The polypeptide is ATP synthase subunit alpha, chloroplastic (Saccharum hybrid (Sugarcane)).